A 365-amino-acid polypeptide reads, in one-letter code: Ribosomal RNA large subunit methyltransferase F (365 aa).

2 stretches are compositionally biased toward low complexity: residues 1 to 18 (MPKPAIKTAAKPATSPAG) and 30 to 42 (AKLKASTAKAASK). A disordered region spans residues 1 to 50 (MPKPAIKTAAKPATSPAGKRAKPNTPQSVAKLKASTAKAASKPKAKLGEK).

The protein belongs to the methyltransferase superfamily. METTL16/RlmF family.

The protein resides in the cytoplasm. It carries out the reaction adenosine(1618) in 23S rRNA + S-adenosyl-L-methionine = N(6)-methyladenosine(1618) in 23S rRNA + S-adenosyl-L-homocysteine + H(+). Its function is as follows. Specifically methylates the adenine in position 1618 of 23S rRNA. The chain is Ribosomal RNA large subunit methyltransferase F from Shewanella oneidensis (strain ATCC 700550 / JCM 31522 / CIP 106686 / LMG 19005 / NCIMB 14063 / MR-1).